The primary structure comprises 203 residues: Probable GTP-binding protein EngB (203 aa).

The 190-residue stretch at 1–190 (MPEIVLVGRS…LEALQERVRK (190 aa)) folds into the EngB-type G domain. GTP-binding positions include 8-15 (GRSNVGKS), 35-39 (GVTRK), 53-56 (DMPG), 132-135 (NKID), and 169-171 (ISA). Residues Ser-15 and Thr-37 each contribute to the Mg(2+) site.

It belongs to the TRAFAC class TrmE-Era-EngA-EngB-Septin-like GTPase superfamily. EngB GTPase family. Mg(2+) serves as cofactor.

Necessary for normal cell division and for the maintenance of normal septation. The protein is Probable GTP-binding protein EngB of Methanopyrus kandleri (strain AV19 / DSM 6324 / JCM 9639 / NBRC 100938).